The following is a 359-amino-acid chain: N-acetylneuraminate-9-phosphate synthase (359 aa).

Residues K61, K74, and K79 each carry the N6-acetyllysine modification. S275 is modified (phosphoserine). K290 is modified (N6-acetyllysine). Residues 294-353 form the AFP-like domain; sequence SVVAKVKIPEGTILTMDMLTVKVGEPKGYPPEDIFNLVGKKVLVTVEEDDTIMEELVDNH.

As to expression, ubiquitous.

The enzyme catalyses aldehydo-N-acetyl-D-mannosamine 6-phosphate + phosphoenolpyruvate + H2O = N-acetylneuraminate 9-phosphate + phosphate. The catalysed reaction is aldehydo-D-mannose 6-phosphate + phosphoenolpyruvate + H2O = 3-deoxy-D-glycero-beta-D-galacto-non-2-ulopyranosonate 9-phosphate + phosphate. In terms of biological role, catalyzes the condensation of phosphoenolpyruvate (PEP) and N-acetylmannosamine 6-phosphate (ManNAc-6-P) to synthesize N-acetylneuraminate-9-phosphate (Neu5Ac-9-P). Also catalyzes the condensation of PEP and D-mannose 6-phosphate (Man-6-P) to produce 3-deoxy-D-glycero-beta-D-galacto-non-2-ulopyranosonate 9-phosphate (KDN-9-P). Neu5Ac-9-P and KDN-9-P are the phosphorylated forms of sialic acids N-acetylneuraminic acid (Neu5Ac) and deaminoneuraminic acid (KDN), respectively. Required for brain and skeletal development. This chain is N-acetylneuraminate-9-phosphate synthase, found in Homo sapiens (Human).